The primary structure comprises 1155 residues: RhoGEF domain-containing protein gxcJ (1155 aa).

5 disordered regions span residues Glu-114–Lys-216, Leu-259–Asn-333, Leu-429–Glu-460, Leu-484–Thr-508, and Ser-604–Gln-639. 3 stretches are compositionally biased toward low complexity: residues Asn-115 to Asn-153, Thr-161 to Asn-211, and Asn-260 to Asn-303. Positions Asn-192–Leu-257 form a coiled coil. Polar residues predominate over residues Tyr-304–Glu-319. The span at Asn-320–Ile-330 shows a compositional bias: basic and acidic residues. The segment covering Phe-441 to Asp-457 has biased composition (low complexity). The segment covering Ser-604–Asn-637 has biased composition (low complexity). Positions His-700 to Gln-874 constitute a DH domain. The disordered stretch occupies residues Ser-1084 to Thr-1155. Low complexity-rich tracts occupy residues Ser-1093 to Asn-1121 and Gln-1128 to Gln-1137.

GTPase-activating protein. The sequence is that of RhoGEF domain-containing protein gxcJ (gxcJ) from Dictyostelium discoideum (Social amoeba).